A 263-amino-acid chain; its full sequence is Phosphatidylglycerol--prolipoprotein diacylglyceryl transferase (263 aa).

A run of 4 helical transmembrane segments spans residues 15 to 35 (ISIHWYAICIVSGLLLAVYLA), 52 to 72 (FILLAFPIAIVGARLYYVIFQ), 83 to 103 (IFAIWNGGIAIYGGLIAGAAV), and 112 to 132 (AIAVLDFLDIAAPGVMIAQSI). Arginine 134 serves as a coordination point for a 1,2-diacyl-sn-glycero-3-phospho-(1'-sn-glycerol). Helical transmembrane passes span 170 to 190 (VPTFLYESLWNLVGFSIILGL), 200 to 220 (GDVTSFYLIWYGLGRFVIEGM), and 230 to 250 (LRVSQWVSISIIILGAVLLYF).

Belongs to the Lgt family.

The protein resides in the cell membrane. The enzyme catalyses L-cysteinyl-[prolipoprotein] + a 1,2-diacyl-sn-glycero-3-phospho-(1'-sn-glycerol) = an S-1,2-diacyl-sn-glyceryl-L-cysteinyl-[prolipoprotein] + sn-glycerol 1-phosphate + H(+). It functions in the pathway protein modification; lipoprotein biosynthesis (diacylglyceryl transfer). Functionally, catalyzes the transfer of the diacylglyceryl group from phosphatidylglycerol to the sulfhydryl group of the N-terminal cysteine of a prolipoprotein, the first step in the formation of mature lipoproteins. The protein is Phosphatidylglycerol--prolipoprotein diacylglyceryl transferase of Streptococcus thermophilus (strain ATCC BAA-250 / LMG 18311).